A 659-amino-acid polypeptide reads, in one-letter code: mRNA export factor ICP27 homolog (659 aa).

Zn(2+)-binding residues include cysteine 130, histidine 266, cysteine 268, and cysteine 273. The segment at 130-273 (CMMSNGERPP…CEHACNDNAC (144 aa)) adopts a CHC2-type zinc-finger fold. A disordered region spans residues 317 to 659 (GSFDDSRSAT…GEDGESDMTL (343 aa)). The span at 324-336 (SATSGDGSSCSSA) shows a compositional bias: low complexity. Polar residues predominate over residues 354-365 (SDQTDTSNNGTV). A compositionally biased stretch (basic and acidic residues) spans 387-397 (SPLDRPNDYHY). Over residues 413–427 (GSGSSSTEAVSTASA) the composition is skewed to low complexity. Residues 483–499 (SPERRSSEERSSSDQRR) show a composition bias toward basic and acidic residues. The span at 503–513 (LSRSASATSGG) shows a compositional bias: polar residues. Positions 553 to 575 (SRSNTPPSSPSKPDSAPAASASP) are enriched in low complexity. Positions 598-610 (ESVRVSERFETGD) are enriched in basic and acidic residues. 2 stretches are compositionally biased toward acidic residues: residues 617–628 (ETEDESDDEDDQ) and 646–659 (SETD…DMTL).

This sequence belongs to the HHV-1 ICP27 protein family.

Its subcellular location is the virion tegument. The protein localises to the virion. It is found in the host nucleus. It localises to the host cytoplasm. Its function is as follows. Immediate early (EI) protein that plays many roles during productive infection including regulation of viral gene expression and nuclear export of intronless viral RNAs. The protein is mRNA export factor ICP27 homolog of Elephantid herpesvirus 1 (isolate Asian elephant/Berlin/Kiba/1998) (EIHV-1).